Reading from the N-terminus, the 311-residue chain is tRNA-cytidine(32) 2-sulfurtransferase (311 aa).

A PP-loop motif motif is present at residues 47–52 (SGGKDS). [4Fe-4S] cluster contacts are provided by Cys-122, Cys-125, and Cys-213.

It belongs to the TtcA family. In terms of assembly, homodimer. Mg(2+) serves as cofactor. [4Fe-4S] cluster is required as a cofactor.

It localises to the cytoplasm. It catalyses the reaction cytidine(32) in tRNA + S-sulfanyl-L-cysteinyl-[cysteine desulfurase] + AH2 + ATP = 2-thiocytidine(32) in tRNA + L-cysteinyl-[cysteine desulfurase] + A + AMP + diphosphate + H(+). The protein operates within tRNA modification. Catalyzes the ATP-dependent 2-thiolation of cytidine in position 32 of tRNA, to form 2-thiocytidine (s(2)C32). The sulfur atoms are provided by the cysteine/cysteine desulfurase (IscS) system. This chain is tRNA-cytidine(32) 2-sulfurtransferase, found in Escherichia coli O157:H7.